Here is a 175-residue protein sequence, read N- to C-terminus: DELTA-stichotoxin-Hcr4a (175 aa).

Positions 1–10 (ALAGAIIAGA) are plays an important role in the hemolytic activity. The tract at residues 9 to 28 (GASLTFQILDKVLAELGQVS) is N-terminal region. Residues S52, V85, S103, P105, Y131, Y135, and Y136 each coordinate phosphocholine. The interval 103–118 (SVPFDYNLYSNWWDVK) is trp-rich region, which is important for the binding to lipid membrane.

Belongs to the actinoporin family. Sea anemone subfamily. In terms of assembly, octamer or nonamer in membranes. Monomer in the soluble state.

It is found in the secreted. The protein resides in the nematocyst. It localises to the target cell membrane. Its function is as follows. Pore-forming protein that forms cations-selective hydrophilic pores of around 1 nm and causes cardiac stimulation and cytolysis. Pore formation is a multi-step process that involves specific recognition of membrane sphingomyelin (but neither cholesterol nor phosphatidylcholine) using aromatic rich region and adjacent phosphocholine (POC) binding site, firm binding to the membrane (mainly driven by hydrophobic interactions) accompanied by the transfer of the N-terminal region to the lipid-water interface and finally pore formation after oligomerization of monomers. This Radianthus crispa (Leathery sea anemone) protein is DELTA-stichotoxin-Hcr4a.